The sequence spans 259 residues: 3-hydroxypropionyl-coenzyme A dehydratase (259 aa).

Glu113 acts as the Nucleophile in catalysis. Glu133 (proton acceptor) is an active-site residue.

The protein belongs to the enoyl-CoA hydratase/isomerase family. As to quaternary structure, monomer.

It carries out the reaction 3-hydroxypropanoyl-CoA = acryloyl-CoA + H2O. Plays a role in autotrophic carbon fixation via the 3-hydroxypropionate/4-hydroxybutyrate cycle. Catalyzes the reversible dehydration of 3-hydroxypropionyl-CoA to form acryloyl-CoA, and the reversible dehydration of (S)-3-hydroxybutyryl-CoA to form crotonyl-CoA. Inactive towards (R)-3-hydroxybutyryl-CoA. In Metallosphaera sedula (strain ATCC 51363 / DSM 5348 / JCM 9185 / NBRC 15509 / TH2), this protein is 3-hydroxypropionyl-coenzyme A dehydratase.